Consider the following 292-residue polypeptide: uncharacterized protein (292 aa).

The helical transmembrane segment at 13–35 threads the bilayer; it reads LFILFIIVVCIYLLPRVAINAFY.

It belongs to the serine esterase family.

The protein resides in the membrane. This is an uncharacterized protein from Salmonella typhi.